A 274-amino-acid polypeptide reads, in one-letter code: tRNA pseudouridine synthase A (274 aa).

D54 acts as the Nucleophile in catalysis. Substrate is bound at residue Y112.

The protein belongs to the tRNA pseudouridine synthase TruA family. Homodimer.

It catalyses the reaction uridine(38/39/40) in tRNA = pseudouridine(38/39/40) in tRNA. Functionally, formation of pseudouridine at positions 38, 39 and 40 in the anticodon stem and loop of transfer RNAs. This chain is tRNA pseudouridine synthase A, found in Solidesulfovibrio magneticus (strain ATCC 700980 / DSM 13731 / RS-1) (Desulfovibrio magneticus).